The sequence spans 111 residues: MEAKAIAKYVRMSPRKVGVVLDLVRGKDVNEAFAILNYTPREAAVVINKVLKSAVANAENNLELDPSRLYVAEAYACQGPTLKRYQPHAQGRAFRINKRTSHVTLVVKERE.

This sequence belongs to the universal ribosomal protein uL22 family. As to quaternary structure, part of the 50S ribosomal subunit.

Its function is as follows. This protein binds specifically to 23S rRNA; its binding is stimulated by other ribosomal proteins, e.g. L4, L17, and L20. It is important during the early stages of 50S assembly. It makes multiple contacts with different domains of the 23S rRNA in the assembled 50S subunit and ribosome. Functionally, the globular domain of the protein is located near the polypeptide exit tunnel on the outside of the subunit, while an extended beta-hairpin is found that lines the wall of the exit tunnel in the center of the 70S ribosome. This is Large ribosomal subunit protein uL22 from Clostridium tetani (strain Massachusetts / E88).